A 974-amino-acid chain; its full sequence is ATP-dependent RNA helicase glh-2 (974 aa).

The interval 212-435 (HESGFGGGKS…SGFGGGNDGG (224 aa)) is disordered. Gly residues predominate over residues 215–250 (GFGGGKSGGFGGGNSGGSGFGSGGNSNGFGSGGGGQ). Residues 256 to 267 (NNNCFNCQQPGH) are compositionally biased toward polar residues. 2 consecutive CCHC-type zinc fingers follow at residues 257-274 (NNCFNCQQPGHRSNDCPE) and 282-299 (RVCYNCQQPGHNSRDCPE). Basic and acidic residues-rich tracts occupy residues 268–282 (RSNDCPEPKKEREPR) and 293–307 (NSRDCPEERKPREGR). Residues 309–364 (GFTGGSSGFGGGNGGGTGFDSGLTNGFGSGNNGESGFGSGGFGGNSNGFGSGGGGQ) are compositionally biased toward gly residues. The segment covering 370–381 (NNNCFNCQQPGH) has biased composition (polar residues). CCHC-type zinc fingers lie at residues 371–388 (NNCFNCQQPGHRSNDCPE) and 396–413 (RVCYNCQQPGHNSRDCPE). 2 stretches are compositionally biased toward basic and acidic residues: residues 382–396 (RSNDCPEPKKEREPR) and 407–421 (NSRDCPEERKPREGR). Positions 426 to 435 (SGFGGGNDGG) are enriched in gly residues. CCHC-type zinc fingers lie at residues 453 to 470 (MKCFNCKGEGHRSAECPE) and 473 to 490 (RGCFNCGEQGHRSNECPN). The short motif at 552–580 (KTFSEANLGETMKKNVAHAGYTKTTPIQQ) is the Q motif element. Positions 583–767 (LPLIHQGHDI…RNHLKEGYIM (185 aa)) constitute a Helicase ATP-binding domain. An ATP-binding site is contributed by 596 to 603 (AQTGSGKT). The short motif at 710-713 (DEAD) is the DEAD box element. One can recognise a Helicase C-terminal domain in the interval 803–950 (DIDSYTTEKN…LVPEWMQGAS (148 aa)).

It belongs to the DEAD box helicase family. DDX4/VASA subfamily. As to quaternary structure, interacts (via C-terminus) with kgb-1.

It catalyses the reaction ATP + H2O = ADP + phosphate + H(+). Functionally, probable ATP-binding RNA helicase. In Caenorhabditis elegans, this protein is ATP-dependent RNA helicase glh-2 (glh-2).